The following is a 461-amino-acid chain: Serine/threonine-protein kinase ppk24, mitochondrial (461 aa).

The Protein kinase domain occupies 120-416; it reads FQHLKSIAKG…LDSILGTAWV (297 aa). ATP contacts are provided by residues 126–134 and Lys153; that span reads IAKGATSTI. Asp256 (proton acceptor) is an active-site residue.

It belongs to the protein kinase superfamily. Ser/Thr protein kinase family.

The protein resides in the mitochondrion. The enzyme catalyses L-seryl-[protein] + ATP = O-phospho-L-seryl-[protein] + ADP + H(+). It catalyses the reaction L-threonyl-[protein] + ATP = O-phospho-L-threonyl-[protein] + ADP + H(+). Its function is as follows. Has a role late in meiosis. The chain is Serine/threonine-protein kinase ppk24, mitochondrial (ppk24) from Schizosaccharomyces pombe (strain 972 / ATCC 24843) (Fission yeast).